We begin with the raw amino-acid sequence, 378 residues long: Zinc transporter 7 (378 aa).

Over 1–37 (MLPLSIKDDEYKPPRLNLFRKMSGWFRSILADKTSRN) the chain is Cytoplasmic. A helical transmembrane segment spans residues 38-58 (LFFFLCLNLSFAFVELLYGVW). The Lumenal segment spans residues 59 to 67 (SNSLGLISD). The helical transmembrane segment at 68 to 88 (SFHMFFDCTALLAGLAASVIS) threads the bilayer. Residues 89-102 (KWRSNDAFSYGYVR) lie on the Cytoplasmic side of the membrane. A helical membrane pass occupies residues 103–123 (AEVLAGFVNGLFLIFTAFFIF). Topologically, residues 124–140 (SEGVERALEPPDVHHER) are lumenal. The helical transmembrane segment at 141-161 (LLPVSILGFIVNLIGIFVFQH) threads the bilayer. The interval 161–223 (HGGHGHSHGS…HGQDYCHDDH (63 aa)) is his-rich loop. Over 162-238 (GGHGHSHGSG…TGSSKQILQG (77 aa)) the chain is Cytoplasmic. The segment at 185–214 (HGHSHRGHGHSHEHKHGHTHDHGHSHGLSH) is disordered. A compositionally biased stretch (basic residues) spans 186–211 (GHSHRGHGHSHEHKHGHTHDHGHSHG). The helical transmembrane segment at 239–259 (VFLHIVADTLGSIGVIISAIL) threads the bilayer. At 260–264 (MQNYG) the chain is on the lumenal side. Residues 265-285 (LMIADPICSMLIALLIGVSIV) traverse the membrane as a helical segment. The Cytoplasmic portion of the chain corresponds to 286–378 (PLLKESIGIL…LYIQIDVAAM (93 aa)).

It belongs to the cation diffusion facilitator (CDF) transporter (TC 2.A.4) family. SLC30A subfamily. As to quaternary structure, homooligomer.

It is found in the golgi apparatus membrane. Its subcellular location is the cytoplasmic vesicle. It localises to the golgi apparatus. The protein localises to the trans-Golgi network. The protein resides in the sarcoplasmic reticulum. It is found in the mitochondrion. The enzyme catalyses Zn(2+)(in) = Zn(2+)(out). In terms of biological role, zinc ion transporter mediating zinc entry from the cytosol into the lumen of organelles along the secretory pathway. By contributing to zinc ion homeostasis within the early secretory pathway, regulates the activation and folding of enzymes like alkaline phosphatases. This Gallus gallus (Chicken) protein is Zinc transporter 7 (SLC30A7).